Reading from the N-terminus, the 443-residue chain is ATP-dependent protease ATPase subunit HslU (443 aa).

Residues Ile18, 60–65 (GVGKTE), Asp256, Glu321, and Arg393 contribute to the ATP site.

The protein belongs to the ClpX chaperone family. HslU subfamily. In terms of assembly, a double ring-shaped homohexamer of HslV is capped on each side by a ring-shaped HslU homohexamer. The assembly of the HslU/HslV complex is dependent on binding of ATP.

The protein localises to the cytoplasm. In terms of biological role, ATPase subunit of a proteasome-like degradation complex; this subunit has chaperone activity. The binding of ATP and its subsequent hydrolysis by HslU are essential for unfolding of protein substrates subsequently hydrolyzed by HslV. HslU recognizes the N-terminal part of its protein substrates and unfolds these before they are guided to HslV for hydrolysis. The protein is ATP-dependent protease ATPase subunit HslU of Pasteurella multocida (strain Pm70).